A 156-amino-acid polypeptide reads, in one-letter code: MNINATLLGQTVAFIIFVWFCMKFVWPPLMNAIEERQKRIADGLADADRAVKDLELAQAKATDQLKDAKATANEIIEQANKRKAQIVDEAKAEADAERAKIIAQGQAEIEAERNRVKEDLRKQVATLAIAGAEKILERSIDEAAHSDIVNKLVAEL.

The chain crosses the membrane as a helical span at residues 13–33 (AFIIFVWFCMKFVWPPLMNAI).

It belongs to the ATPase B chain family. F-type ATPases have 2 components, F(1) - the catalytic core - and F(0) - the membrane proton channel. F(1) has five subunits: alpha(3), beta(3), gamma(1), delta(1), epsilon(1). F(0) has three main subunits: a(1), b(2) and c(10-14). The alpha and beta chains form an alternating ring which encloses part of the gamma chain. F(1) is attached to F(0) by a central stalk formed by the gamma and epsilon chains, while a peripheral stalk is formed by the delta and b chains.

The protein resides in the cell inner membrane. In terms of biological role, f(1)F(0) ATP synthase produces ATP from ADP in the presence of a proton or sodium gradient. F-type ATPases consist of two structural domains, F(1) containing the extramembraneous catalytic core and F(0) containing the membrane proton channel, linked together by a central stalk and a peripheral stalk. During catalysis, ATP synthesis in the catalytic domain of F(1) is coupled via a rotary mechanism of the central stalk subunits to proton translocation. Functionally, component of the F(0) channel, it forms part of the peripheral stalk, linking F(1) to F(0). This is ATP synthase subunit b from Shewanella woodyi (strain ATCC 51908 / MS32).